The sequence spans 293 residues: Cep170-like protein (293 aa).

2 disordered regions span residues 78–110 (PPLVHSKTPEGNNGRSGDPRPQAAEPPDHLTIT) and 217–270 (FPSA…AESE). Over residues 227–245 (KQKSSPVNNHHSPGQTPTL) the composition is skewed to polar residues.

It belongs to the CEP170 family.

This is Cep170-like protein (CEP170P1) from Homo sapiens (Human).